The sequence spans 453 residues: MKLLTRAGSLSRFYSLKVAPKVKATEAPAGVPPHPQDLEFTRLPNGLVIASLENYAPASRIGLFIKAGSRYENSNNLGTSHLLRLASSLTTKGASSFKITRGIEAVGGKLSVTSTRENMAYTVECLRDDVDILMEFLLNVTTAPEFRRWEVAALQPQLRIDKAVALQNPQAHVIENLHAAAYRNALANSLYCPDYRIGKVTPVELHDYVQNHFTSARMALIGLGVSHPVLKQVAEQFLNIRGGLGLSGAKAKYHGGEIREQNGDSLVHAALVAESAAIGSAEANAFSVLQHVLGAGPHVKRGSNATSSLYQAVAKGVHQPFDVSAFNASYSDSGLFGFYTISQAASAGDVIKAAYNQVKTIAQGNLSNPDVQAAKNKLKAGYLMSVESSEGFLDEVGSQALAAGSYTPPSTVLQQIDAVADADVINAAKKFVSGRKSMAASGNLGHTPFIDEL.

Residues 1 to 14 (MKLLTRAGSLSRFY) constitute a mitochondrion transit peptide. N6-acetyllysine is present on residues Lys-66, Lys-199, and Lys-250.

The protein belongs to the peptidase M16 family. UQCRC2/QCR2 subfamily. As to quaternary structure, component of the ubiquinol-cytochrome c oxidoreductase (cytochrome b-c1 complex, complex III, CIII), a multisubunit enzyme composed of 11 subunits. The complex is composed of 3 respiratory subunits cytochrome b, cytochrome c1 and Rieske protein UQCRFS1, 2 core protein subunits UQCRC1/QCR1 and UQCRC2/QCR2, and 6 low-molecular weight protein subunits UQCRH/QCR6, UQCRB/QCR7, UQCRQ/QCR8, UQCR10/QCR9, UQCR11/QCR10 and subunit 9, the cleavage product of Rieske protein UQCRFS1. The complex exists as an obligatory dimer and forms supercomplexes (SCs) in the inner mitochondrial membrane with NADH-ubiquinone oxidoreductase (complex I, CI) and cytochrome c oxidase (complex IV, CIV), resulting in different assemblies (supercomplex SCI(1)III(2)IV(1) and megacomplex MCI(2)III(2)IV(2)). Interacts with RAB5IF. Interacts with STMP1.

The protein resides in the mitochondrion inner membrane. In terms of biological role, component of the ubiquinol-cytochrome c oxidoreductase, a multisubunit transmembrane complex that is part of the mitochondrial electron transport chain which drives oxidative phosphorylation. The respiratory chain contains 3 multisubunit complexes succinate dehydrogenase (complex II, CII), ubiquinol-cytochrome c oxidoreductase (cytochrome b-c1 complex, complex III, CIII) and cytochrome c oxidase (complex IV, CIV), that cooperate to transfer electrons derived from NADH and succinate to molecular oxygen, creating an electrochemical gradient over the inner membrane that drives transmembrane transport and the ATP synthase. The cytochrome b-c1 complex catalyzes electron transfer from ubiquinol to cytochrome c, linking this redox reaction to translocation of protons across the mitochondrial inner membrane, with protons being carried across the membrane as hydrogens on the quinol. In the process called Q cycle, 2 protons are consumed from the matrix, 4 protons are released into the intermembrane space and 2 electrons are passed to cytochrome c. The 2 core subunits UQCRC1/QCR1 and UQCRC2/QCR2 are homologous to the 2 mitochondrial-processing peptidase (MPP) subunits beta-MPP and alpha-MPP respectively, and they seem to have preserved their MPP processing properties. May be involved in the in situ processing of UQCRFS1 into the mature Rieske protein and its mitochondrial targeting sequence (MTS)/subunit 9 when incorporated into complex III. The chain is Cytochrome b-c1 complex subunit 2, mitochondrial (UQCRC2) from Bos taurus (Bovine).